The following is a 287-amino-acid chain: Bifunctional protein FolD (287 aa).

Residues 166 to 168 (GAS) and Ile232 contribute to the NADP(+) site.

It belongs to the tetrahydrofolate dehydrogenase/cyclohydrolase family. Homodimer.

It catalyses the reaction (6R)-5,10-methylene-5,6,7,8-tetrahydrofolate + NADP(+) = (6R)-5,10-methenyltetrahydrofolate + NADPH. The catalysed reaction is (6R)-5,10-methenyltetrahydrofolate + H2O = (6R)-10-formyltetrahydrofolate + H(+). The protein operates within one-carbon metabolism; tetrahydrofolate interconversion. Functionally, catalyzes the oxidation of 5,10-methylenetetrahydrofolate to 5,10-methenyltetrahydrofolate and then the hydrolysis of 5,10-methenyltetrahydrofolate to 10-formyltetrahydrofolate. This chain is Bifunctional protein FolD, found in Pectobacterium carotovorum subsp. carotovorum (strain PC1).